A 249-amino-acid polypeptide reads, in one-letter code: Small ribosomal subunit protein uS2 (249 aa).

Belongs to the universal ribosomal protein uS2 family.

This chain is Small ribosomal subunit protein uS2, found in Acinetobacter baylyi (strain ATCC 33305 / BD413 / ADP1).